Here is a 322-residue protein sequence, read N- to C-terminus: Olfactory receptor 5P2 (322 aa).

At 1–28 (MNSLKDGNHTALTGFILLGLTDDPILRV) the chain is on the extracellular side. A glycan (N-linked (GlcNAc...) asparagine) is linked at asparagine 8. The helical transmembrane segment at 29 to 42 (ILFMIILSGNLSII) threads the bilayer. At 43–50 (ILIRISSQ) the chain is on the cytoplasmic side. The chain crosses the membrane as a helical span at residues 51 to 71 (LHHPMYFFLSHLAFADMAYSS). Topologically, residues 72 to 95 (SVTPNMLVNFLVERNTVSYLGCAI) are extracellular. Cysteine 93 and cysteine 185 form a disulfide bridge. A helical membrane pass occupies residues 96–116 (QLGSAAFFATVECVLLAAMAY). The Cytoplasmic portion of the chain corresponds to 117-135 (DRFVAICSPLLYSTKMSTQ). Residues 136 to 156 (VSVQLLLVVYIAGFLIAVSYT) traverse the membrane as a helical segment. The Extracellular portion of the chain corresponds to 157–192 (TSFYFLLFCGPNQVNHFFCDFAPLLELSCSDISVST). Residues 193–213 (VVLSFSSGSIIVVTVCVIAVC) traverse the membrane as a helical segment. Residues 214-233 (YIYILITILKMRSTEGHHKA) are Cytoplasmic-facing. A helical membrane pass occupies residues 234 to 254 (FSTCTSHLTVVTLFYGTITFI). Topologically, residues 255–267 (YVMPNFSYSTDQN) are extracellular. Asparagine 259 is a glycosylation site (N-linked (GlcNAc...) asparagine). The chain crosses the membrane as a helical span at residues 268–288 (KVVSVLYTVVIPMLNPLIYSL). Residues 289 to 322 (RNKEIKGALKRELVRKILSHDACYFSRTSNNDIT) are Cytoplasmic-facing.

The protein belongs to the G-protein coupled receptor 1 family. As to expression, expressed in the tongue.

The protein localises to the cell membrane. Its function is as follows. Odorant receptor (Potential). May be involved in taste perception. This Homo sapiens (Human) protein is Olfactory receptor 5P2 (OR5P2).